Consider the following 177-residue polypeptide: Austinoid biosynthesis clusters protein F (177 aa).

This sequence belongs to the trt14 isomerase family. As to quaternary structure, homodimer.

The protein operates within secondary metabolite biosynthesis; terpenoid biosynthesis. Its function is as follows. Part of the gene cluster B that mediates the biosynthesis of austinol and dehydroaustinol, two fungal meroterpenoids. The first step of the pathway is the synthesis of 3,5-dimethylorsellinic acid by the polyketide synthase ausA. 3,5-dimethylorsellinic acid is then prenylated by the polyprenyl transferase ausN. Further epoxidation by the FAD-dependent monooxygenase ausM and cyclization by the probable terpene cyclase ausL lead to the formation of protoaustinoid A. Protoaustinoid A is then oxidized to spiro-lactone preaustinoid A3 by the combined action of the FAD-binding monooxygenases ausB and ausC, and the dioxygenase ausE. Acid-catalyzed keto-rearrangement and ring contraction of the tetraketide portion of preaustinoid A3 by ausJ lead to the formation of preaustinoid A4. The aldo-keto reductase ausK, with the help of ausH, is involved in the next step by transforming preaustinoid A4 into isoaustinone which is in turn hydroxylated by the P450 monooxygenase ausI to form austinolide. Finally, the cytochrome P450 monooxygenase ausG modifies austinolide to austinol. Austinol can be further modified to dehydroaustinol which forms a diffusible complex with diorcinol that initiates conidiation. Due to genetic rearrangements of the clusters and the subsequent loss of some enzymes, the end products of the Emericella nidulans austinoid biosynthesis clusters are austinol and dehydroaustinol, even if additional enzymes, such as the O-acetyltransferase ausQ and the cytochrome P450 monooxygenase ausR are still functional. The polypeptide is Austinoid biosynthesis clusters protein F (Emericella nidulans (strain FGSC A4 / ATCC 38163 / CBS 112.46 / NRRL 194 / M139) (Aspergillus nidulans)).